The chain runs to 429 residues: Ribosomal RNA small subunit methyltransferase B (429 aa).

S-adenosyl-L-methionine is bound by residues 254 to 260 (CAAPGGK), Asp-277, Asp-303, and Asp-322. Cys-375 acts as the Nucleophile in catalysis.

Belongs to the class I-like SAM-binding methyltransferase superfamily. RsmB/NOP family.

The protein localises to the cytoplasm. The catalysed reaction is cytidine(967) in 16S rRNA + S-adenosyl-L-methionine = 5-methylcytidine(967) in 16S rRNA + S-adenosyl-L-homocysteine + H(+). Specifically methylates the cytosine at position 967 (m5C967) of 16S rRNA. In Erwinia tasmaniensis (strain DSM 17950 / CFBP 7177 / CIP 109463 / NCPPB 4357 / Et1/99), this protein is Ribosomal RNA small subunit methyltransferase B.